Consider the following 438-residue polypeptide: MVDYQGKKVVIIGLGLTGLSCVDFFIARGVTPRVMDTRINPPGLDQLPESVEQHVGDLNQEWLLDADLIVVSPGMALAHPALSEAAEAGVEIIGDIELFCRENQAPVVAITGSNGKSTVTTLVGEMAKAAGWSVGVGGNIGVPALTLLKQDNQLTVLELSSFQLETTHSLRASAATILNVTEDHTDRYPLGLQQYRAAKLRVYENAKVCIVNADDALTMPVRGADSRCISFGVDVGDYHLNKQQGEIWLRVRGEKVLNTREMKLSGRHNYTNALAALALADAVGIPRASSLKALTTFSGLPHRFQLVLERHGVRWINDSKATNVGSTEAALDGLQVDGTLHLLLGGDGKSADFSGLTRFLQGDRIKVYCFGRDGGQLAALRPDVSQLTETMAQAMALVAKVVLPGDRVLLSPACASLDQFRSFEHRGNEFARLAEELG.

112-118 contributes to the ATP binding site; that stretch reads GSNGKST.

The protein belongs to the MurCDEF family.

Its subcellular location is the cytoplasm. The enzyme catalyses UDP-N-acetyl-alpha-D-muramoyl-L-alanine + D-glutamate + ATP = UDP-N-acetyl-alpha-D-muramoyl-L-alanyl-D-glutamate + ADP + phosphate + H(+). The protein operates within cell wall biogenesis; peptidoglycan biosynthesis. Its function is as follows. Cell wall formation. Catalyzes the addition of glutamate to the nucleotide precursor UDP-N-acetylmuramoyl-L-alanine (UMA). In Yersinia pseudotuberculosis serotype I (strain IP32953), this protein is UDP-N-acetylmuramoylalanine--D-glutamate ligase.